We begin with the raw amino-acid sequence, 1483 residues long: Cystic fibrosis transmembrane conductance regulator (1483 aa).

Topologically, residues 1–77 are cytoplasmic; the sequence is MQRSPLEKAS…KLINALRRCF (77 aa). The chain crosses the membrane as a helical span at residues 78-98; the sequence is FWRFAFYGILLYLGEVTKAVQ. Residues 81 to 365 form the ABC transmembrane type-1 1 domain; sequence FAFYGILLYL…WAVQTWYDSL (285 aa). The Extracellular portion of the chain corresponds to 99 to 122; that stretch reads PLLLGRIIASYDPDNKQERSIAIY. Residues 123 to 146 traverse the membrane as a helical segment; the sequence is LAIGLCLLFIMRPLLLHPAIFGLH. At 147–195 the chain is on the cytoplasmic side; the sequence is HIGMQIRIAMFSLIYKKTLKLSSRVLDKISIGQLVSLLSNNLNKFDEGL. Residues 196-216 form a helical membrane-spanning segment; the sequence is ALAHFVWIAPLQVTLLMGLLW. The Extracellular portion of the chain corresponds to 217 to 222; it reads DLLQAS. A helical membrane pass occupies residues 223-243; the sequence is AFCGLAFLIVLALVQAGLGRM. At 244–298 the chain is on the cytoplasmic side; it reads IMKYRDQRAGKINERLVITSEVIENIQSVKAYCWEEAMEKIIENIRQTELKLTRK. A helical transmembrane segment spans residues 299–319; the sequence is AAHVRYFNSSAFFFSGFFVVS. At 320–339 the chain is on the extracellular side; that stretch reads LSVLPYALIKTIILRKIFTT. Residues 340-358 traverse the membrane as a helical segment; it reads ISFCIVLRMAVTRQFPWAV. The Cytoplasmic portion of the chain corresponds to 359–859; the sequence is QTWYDSLGAI…YLRYITVHKN (501 aa). Residues Trp-401, Ser-434, 458–465, and Gln-493 contribute to the ATP site; that span reads GSTGAGKT. One can recognise an ABC transporter 1 domain in the interval 423–646; sequence NGDNSLFFSN…RPDFSSKLMG (224 aa). A lipid anchor (S-palmitoyl cysteine) is attached at Cys-524. Ser-549 and Ser-660 each carry phosphoserine. Positions 654 to 832 are disordered R region; the sequence is SPERRNSIIT…EEINEEDLKE (179 aa). Residue Ser-670 is modified to Phosphoserine; by PKA. Residue Ser-686 is modified to Phosphoserine. Residue Lys-688 forms a Glycyl lysine isopeptide (Lys-Gly) (interchain with G-Cter in ubiquitin) linkage. A phosphoserine mark is found at Ser-700 and Ser-712. Position 717 is a phosphothreonine (Thr-717). A phosphoserine mark is found at Ser-737, Ser-768, Ser-791, Ser-796, and Ser-814. A helical transmembrane segment spans residues 860 to 880; that stretch reads LIFVLIWCLVIFLAEVAVSLV. The 297-residue stretch at 860–1156 folds into the ABC transmembrane type-1 2 domain; it reads LIFVLIWCLV…AVNSSIEVDS (297 aa). The Extracellular portion of the chain corresponds to 881–919; the sequence is VLWILRNLSSQDKGNSTQSVNSSYAVIFTSTSAYYIFYI. N-linked (GlcNAc...) asparagine glycans are attached at residues Asn-887, Asn-895, and Asn-901. A discontinuously helical transmembrane segment spans residues 920–940; it reads YVGVADTLLALGLFRGLPLVH. Over 941-991 the chain is Cytoplasmic; it reads TLITVSKILHHKMLHSVLQAPMSTLNTLKAGGILNRFSKDIAILDDLLPLT. A helical membrane pass occupies residues 992–1012; that stretch reads IFDFIQLLLIVIGAVAVVSVL. Residues 1013–1014 lie on the Extracellular side of the membrane; it reads QP. The helical transmembrane segment at 1015–1035 threads the bilayer; it reads YIFLATVPVIAAFIILRAYFL. Residues 1036-1096 are Cytoplasmic-facing; sequence HTSQQLKQLE…TANWFLYLST (61 aa). A helical membrane pass occupies residues 1097-1117; sequence LRWFQMRMEIIFVIFFIAVTF. Over 1118-1131 the chain is Extracellular; it reads ISILTTGEGEGTVG. The chain crosses the membrane as a helical span at residues 1132 to 1152; sequence IILTLAMNIMGTLQWAVNSSI. Topologically, residues 1153-1483 are cytoplasmic; it reads EVDSLMRSVS…TEDEVQDTRL (331 aa). In terms of domain architecture, ABC transporter 2 spans 1213–1446; that stretch reads MTVKDLTAKY…RSAFRQAIGP (234 aa). Residues Tyr-1222 and 1247–1254 contribute to the ATP site; that span reads GRTGSGKS. The interval 1389–1483 is interaction with GORASP2; that stretch reads RTLKQAFADC…TEDEVQDTRL (95 aa). Cys-1398 is lipidated: S-palmitoyl cysteine. A disordered region spans residues 1444 to 1483; it reads IGPPERPGLLPHRLSSRQRSPSRIAALKEETEDEVQDTRL. The residue at position 1459 (Ser-1459) is a Phosphoserine. Over residues 1473-1483 the composition is skewed to acidic residues; the sequence is ETEDEVQDTRL. The short motif at 1481-1483 is the PDZ-binding element; that stretch reads TRL.

It belongs to the ABC transporter superfamily. ABCC family. CFTR transporter (TC 3.A.1.202) subfamily. Monomer; does not require oligomerization for channel activity. May form oligomers in the membrane. Interacts with SLC26A3, SLC26A6 and NHERF1. Interacts with SHANK2. Interacts with MYO6. Interacts (via C-terminus) with GOPC (via PDZ domain); this promotes CFTR internalization and thereby decreases channel activity. Interacts with SLC4A7 through NHERF1. Found in a complex with MYO5B and RAB11A. Interacts with ANO1. Interacts with SLC26A8. Interacts with AHCYL1; the interaction increases CFTR activity. Interacts with CSE1L. The core-glycosylated form interacts with GORASP2 (via PDZ GRASP-type 1 domain) in respone to ER stress. Interacts with MARCHF2; the interaction leads to CFTR ubiqtuitination and degradation. Interacts with ADGRG2. In terms of processing, N-glycosylated. Post-translationally, phosphorylated; cAMP treatment promotes phosphorylation and activates the channel. Dephosphorylation decreases the ATPase activity (in vitro). Phosphorylation at PKA sites activates the channel. Phosphorylation at PKC sites enhances the response to phosphorylation by PKA. Phosphorylated by AMPK; this inhibits channel activity. Ubiquitinated, leading to its degradation in the lysosome. Deubiquitination by USP10 in early endosomes enhances its endocytic recycling to the cell membrane. Ubiquitinated by RNF185 during ER stress. Ubiquitinated by MARCHF2.

The protein localises to the apical cell membrane. It localises to the early endosome membrane. Its subcellular location is the cell membrane. It is found in the recycling endosome membrane. The protein resides in the endoplasmic reticulum membrane. The protein localises to the nucleus. It catalyses the reaction ATP + H2O + closed Cl(-) channel = ADP + phosphate + open Cl(-) channel.. The enzyme catalyses chloride(in) = chloride(out). The catalysed reaction is hydrogencarbonate(in) = hydrogencarbonate(out). It carries out the reaction ATP + H2O = ADP + phosphate + H(+). In terms of biological role, epithelial ion channel that plays an important role in the regulation of epithelial ion and water transport and fluid homeostasis. Mediates the transport of chloride ions across the cell membrane. Possesses an intrinsic ATPase activity and utilizes ATP to gate its channel; the passive flow of anions through the channel is gated by cycles of ATP binding and hydrolysis by the ATP-binding domains. The ion channel is also permeable to HCO(3)(-); selectivity depends on the extracellular chloride concentration. Exerts its function also by modulating the activity of other ion channels and transporters. Contributes to the regulation of the pH and the ion content of the epithelial fluid layer. Modulates the activity of the epithelial sodium channel (ENaC) complex, in part by regulating the cell surface expression of the ENaC complex. May regulate bicarbonate secretion and salvage in epithelial cells by regulating the transporter SLC4A7. Can inhibit the chloride channel activity of ANO1. Plays a role in the chloride and bicarbonate homeostasis during sperm epididymal maturation and capacitation. In Canis lupus familiaris (Dog), this protein is Cystic fibrosis transmembrane conductance regulator.